Here is a 555-residue protein sequence, read N- to C-terminus: Phosphomethylpyrimidine synthase (555 aa).

Residues Asn-191, Met-220, Tyr-249, His-285, 305-307 (SRG), 346-349 (DGLR), and Glu-385 each bind substrate. His-389 is a binding site for Zn(2+). Tyr-412 serves as a coordination point for substrate. Residue His-453 participates in Zn(2+) binding. Residues Cys-533, Cys-536, and Cys-541 each contribute to the [4Fe-4S] cluster site.

This sequence belongs to the ThiC family. As to quaternary structure, homodimer. The cofactor is [4Fe-4S] cluster.

It carries out the reaction 5-amino-1-(5-phospho-beta-D-ribosyl)imidazole + S-adenosyl-L-methionine = 4-amino-2-methyl-5-(phosphooxymethyl)pyrimidine + CO + 5'-deoxyadenosine + formate + L-methionine + 3 H(+). The protein operates within cofactor biosynthesis; thiamine diphosphate biosynthesis. Functionally, catalyzes the synthesis of the hydroxymethylpyrimidine phosphate (HMP-P) moiety of thiamine from aminoimidazole ribotide (AIR) in a radical S-adenosyl-L-methionine (SAM)-dependent reaction. In Ehrlichia ruminantium (strain Gardel), this protein is Phosphomethylpyrimidine synthase.